Reading from the N-terminus, the 328-residue chain is Carbonic anhydrase-related protein 11 (328 aa).

An N-terminal signal peptide occupies residues 1–23 (MGAAARLSAPRALVLWAALGAAA). One can recognise an Alpha-carbonic anhydrase domain in the interval 33-303 (DWWSYKDNLQ…LAHRALRGNR (271 aa)). Asn-118, Asn-170, and Asn-260 each carry an N-linked (GlcNAc...) asparagine glycan. The interval 299–328 (LRGNRDPRHPERRCRGPNYRLHVDGVPHGR) is disordered. Residues 319–328 (LHVDGVPHGR) show a composition bias toward basic and acidic residues.

Belongs to the alpha-carbonic anhydrase family. Expressed abundantly in the brain with moderate expression also present in spinal cord and thyroid.

It localises to the secreted. Its function is as follows. Does not have a catalytic activity. The protein is Carbonic anhydrase-related protein 11 (CA11) of Homo sapiens (Human).